A 670-amino-acid chain; its full sequence is ATP synthase subunit alpha 2 (670 aa).

180–187 (GDRATGKT) is a binding site for ATP. The segment at 527 to 670 (AEDAAGDIGG…DAEAEARHKR (144 aa)) is disordered. Over residues 543–588 (ARGDADRDADHGANREVSREVSPEASREVSREVSREVSHEADRDAA) the composition is skewed to basic and acidic residues. Residues 589-599 (ADAARVAGRAP) are compositionally biased toward low complexity. A compositionally biased stretch (basic and acidic residues) spans 621-639 (ADGDRASASRPRPDARGDA). Low complexity predominate over residues 640-661 (ARTAPSPQGGAEVNVNAAANVD).

Belongs to the ATPase alpha/beta chains family. F-type ATPases have 2 components, CF(1) - the catalytic core - and CF(0) - the membrane proton channel. CF(1) has five subunits: alpha(3), beta(3), gamma(1), delta(1), epsilon(1). CF(0) has three main subunits: a(1), b(2) and c(9-12). The alpha and beta chains form an alternating ring which encloses part of the gamma chain. CF(1) is attached to CF(0) by a central stalk formed by the gamma and epsilon chains, while a peripheral stalk is formed by the delta and b chains.

It localises to the cell inner membrane. The enzyme catalyses ATP + H2O + 4 H(+)(in) = ADP + phosphate + 5 H(+)(out). In terms of biological role, produces ATP from ADP in the presence of a proton gradient across the membrane. The alpha chain is a regulatory subunit. This chain is ATP synthase subunit alpha 2, found in Burkholderia pseudomallei (strain 668).